Reading from the N-terminus, the 425-residue chain is UPF0597 protein VSAL_I0741 (425 aa).

Belongs to the UPF0597 family.

The protein is UPF0597 protein VSAL_I0741 of Aliivibrio salmonicida (strain LFI1238) (Vibrio salmonicida (strain LFI1238)).